The sequence spans 450 residues: TATA box-binding protein-associated factor RNA polymerase I subunit A (450 aa).

Component of the transcription factor SL1/TIF-IB complex, composed of TBP and at least TAF1A, TAF1B, TAF1C and TAF1D. In the complex interacts directly with TBP, TAF1A and TAF1B. Interaction of the SL1/TIF-IB subunits with TBP excludes interaction of TBP with the transcription factor IID (TFIID) subunits. Interacts with UBFT. Interacts with CEBPA (isoform 1 and isoform 4). Part of Pol I pre-initiation complex (PIC), in which Pol I core assembles with RRN3 and promoter-bound UTBF and SL1/TIF-IB complex.

It localises to the nucleus. The protein resides in the nucleolus. Functionally, component of the transcription factor SL1/TIF-IB complex, which is involved in the assembly of the PIC (pre-initiation complex) during RNA polymerase I-dependent transcription. The rate of PIC formation probably is primarily dependent on the rate of association of SL1/TIF-IB with the rDNA promoter. SL1/TIF-IB is involved in stabilization of nucleolar transcription factor 1/UBTF on rDNA. Formation of SL1/TIF-IB excludes the association of TBP with TFIID subunits. This Homo sapiens (Human) protein is TATA box-binding protein-associated factor RNA polymerase I subunit A (TAF1A).